A 108-amino-acid polypeptide reads, in one-letter code: Phosphoribosyl-ATP pyrophosphatase (108 aa).

It belongs to the PRA-PH family.

It localises to the cytoplasm. The enzyme catalyses 1-(5-phospho-beta-D-ribosyl)-ATP + H2O = 1-(5-phospho-beta-D-ribosyl)-5'-AMP + diphosphate + H(+). The protein operates within amino-acid biosynthesis; L-histidine biosynthesis; L-histidine from 5-phospho-alpha-D-ribose 1-diphosphate: step 2/9. The polypeptide is Phosphoribosyl-ATP pyrophosphatase (Pelobacter propionicus (strain DSM 2379 / NBRC 103807 / OttBd1)).